Here is a 94-residue protein sequence, read N- to C-terminus: Protein SpdA (94 aa).

Residues 41-68 (GPILLALVAAGGSVGVVMTLCLLLQTAA) form a helical membrane-spanning segment.

The protein localises to the cell membrane. In terms of biological role, involved in plasmid transfer. The polypeptide is Protein SpdA (spdA) (Streptomyces lividans).